Consider the following 1336-residue polypeptide: DNA-directed RNA polymerase subunit beta' (1336 aa).

Cysteine 60, cysteine 62, cysteine 75, and cysteine 78 together coordinate Zn(2+). Mg(2+) is bound by residues aspartate 535, aspartate 537, and aspartate 539. Zn(2+) contacts are provided by cysteine 902, cysteine 984, cysteine 991, and cysteine 994.

Belongs to the RNA polymerase beta' chain family. The RNAP catalytic core consists of 2 alpha, 1 beta, 1 beta' and 1 omega subunit. When a sigma factor is associated with the core the holoenzyme is formed, which can initiate transcription. It depends on Mg(2+) as a cofactor. Requires Zn(2+) as cofactor.

The catalysed reaction is RNA(n) + a ribonucleoside 5'-triphosphate = RNA(n+1) + diphosphate. Its function is as follows. DNA-dependent RNA polymerase catalyzes the transcription of DNA into RNA using the four ribonucleoside triphosphates as substrates. The protein is DNA-directed RNA polymerase subunit beta' of Corynebacterium diphtheriae (strain ATCC 700971 / NCTC 13129 / Biotype gravis).